The chain runs to 83 residues: Putative snRNP Sm-like protein (83 aa).

A Sm domain is found at 9–81 (KPMDVLKSAL…VIFVSPSKGD (73 aa)).

Belongs to the snRNP Sm proteins family.

This chain is Putative snRNP Sm-like protein, found in Thermoplasma acidophilum (strain ATCC 25905 / DSM 1728 / JCM 9062 / NBRC 15155 / AMRC-C165).